A 191-amino-acid chain; its full sequence is NADH-quinone oxidoreductase subunit B (191 aa).

4 residues coordinate [4Fe-4S] cluster: Cys70, Cys71, Cys135, and Cys165.

The protein belongs to the complex I 20 kDa subunit family. NDH-1 is composed of 14 different subunits. Subunits NuoB, C, D, E, F, and G constitute the peripheral sector of the complex. [4Fe-4S] cluster serves as cofactor.

Its subcellular location is the cell inner membrane. It carries out the reaction a quinone + NADH + 5 H(+)(in) = a quinol + NAD(+) + 4 H(+)(out). Its function is as follows. NDH-1 shuttles electrons from NADH, via FMN and iron-sulfur (Fe-S) centers, to quinones in the respiratory chain. The immediate electron acceptor for the enzyme in this species is believed to be ubiquinone. Couples the redox reaction to proton translocation (for every two electrons transferred, four hydrogen ions are translocated across the cytoplasmic membrane), and thus conserves the redox energy in a proton gradient. The sequence is that of NADH-quinone oxidoreductase subunit B from Parvibaculum lavamentivorans (strain DS-1 / DSM 13023 / NCIMB 13966).